The following is a 380-amino-acid chain: MSSSEVASHYNKVLQVGIEGRKESRIFFMRNMNNWVKSQLINDAKQRVNDNGVNNPRVLDLACGKGGDLKKWDIAGAKDVVMADVADVSIQQAEERYKQMFGYKKNNIFTVQFIVADCTKENLEDRIENKDPFDLVSCQFALHYSFVDEASARIFLKNAVGMLKPGGVFIGTLPDADRIVWSMRNGENGQFANEVCKITYENVEELAEGKVPLFGAKFHFSLDEQVNCPEFLAYFPLVKHLLEELDMELLFVHNFAEAINKWLEPGRRLLESMTGLETYPNEKLSGKSDDEYLEAKAKLDAFPEDERIKTMGTLSKSEWEAICMYLVFGFRKKKSEAEKTEEEPATTKPVAESESEQKEVTESEEKEDQEDCEHQEAQTN.

Residues 24–333 (SRIFFMRNMN…MYLVFGFRKK (310 aa)) enclose the mRNA cap 0 methyltransferase domain. Residue 33–34 (NN) participates in mRNA binding. The S-adenosyl-L-methionine site is built by lysine 37, alanine 62, aspartate 84, aspartate 117, glutamine 139, and tyrosine 144. The segment at 336-380 (EAEKTEEEPATTKPVAESESEQKEVTESEEKEDQEDCEHQEAQTN) is disordered.

Belongs to the class I-like SAM-binding methyltransferase superfamily. mRNA cap 0 methyltransferase family.

The protein resides in the nucleus. It carries out the reaction a 5'-end (5'-triphosphoguanosine)-ribonucleoside in mRNA + S-adenosyl-L-methionine = a 5'-end (N(7)-methyl 5'-triphosphoguanosine)-ribonucleoside in mRNA + S-adenosyl-L-homocysteine. MRNA-capping methyltransferase that methylates the N7 position of the added guanosine to the 5'-cap structure of mRNAs. Binds RNA containing 5'-terminal GpppC. The chain is mRNA cap guanine-N(7) methyltransferase (tag-72) from Caenorhabditis elegans.